Reading from the N-terminus, the 251-residue chain is Prothoracicostatic peptides (251 aa).

Residues 1-22 (MRKSARGQVCTEAGAGASGDWQ) form a disordered region. Positions 1 to 77 (MRKSARGQVC…GWQDLNSAWG (77 aa)) are excised as a propeptide. Residue tryptophan 89 is modified to Tryptophan amide. Residues 93-138 (GWNDMSSAWGKRGWNDMSSAWGKRGWNDMSSAWGKRGWNDMSSAWG) constitute a propeptide that is removed on maturation. Residue tryptophan 152 is modified to Tryptophan amide. Residues 156–187 (AAEPDYEEIDAAIEQLIPIQQLSDNERMEVPE) constitute a propeptide that is removed on maturation. A tryptophan amide mark is found at tryptophan 198 and tryptophan 228. The tract at residues 227–251 (MWGKRSAPDADAVDDDHESSARDEA) is disordered.

In terms of tissue distribution, prothoracicostatic peptide 5: Expressed in antennal lobe (AL), corpora cardiaca (CC), corpora allata (CA) and gnathal ganglion (GNG) (at protein level). Expression in AL detected in all animals, in CC, CA and GNG in most (at protein level). Prothoracicostatic peptide 6: Expressed in antennal lobe (AL), corpora cardiaca (CC), corpora allata (CA) and gnathal ganglion (GNG) (at protein level). Expression in AL detected in all animals, expression in GNG in most animals, in CA and CC detected in some animals (at protein level). Prothoracicostatic peptide 7: Expressed in antennal lobe (AL), corpora cardiaca (CC), corpora allata (CA) and gnathal ganglion (GNG) (at protein level). Expression in AL, CA and CC detected in most animals, expression in GNG in some animals (at protein level). Prothoracicostatic peptide precursor-related peptide 2: Expressed in antennal lobe (AL), corpora cardiaca (CC) and corpora allata (CA) with expression detected in few animals (at protein level). Not expressed in gnathal ganglion (GNG) (at protein level). Prothoracicostatic peptide 8: Expressed in antennal lobe (AL), corpora cardiaca (CC), corpora allata (CA) and gnathal ganglion (GNG) (at protein level). Expression in AL detected in all animals, expression in GNG in most animals, in CA and CC detected in some animals (at protein level). Prothoracicostatic peptide precursor-related peptide 3: Expressed in antennal lobe (AL) in few animals (at protein level). Not expressed in corpora cardiaca (CC), corpora allata (CA) and gnathal ganglion (GNG) (at protein level).

The protein resides in the secreted. This chain is Prothoracicostatic peptides, found in Agrotis ipsilon (Black cutworm moth).